The chain runs to 260 residues: Thrombin-like enzyme gloshedobin (260 aa).

The N-terminal stretch at 1–18 is a signal peptide; that stretch reads MVLIRVQANLLILQLSYA. Residues 19–24 constitute a propeptide that is removed on maturation; it reads QKSSEL. Positions 25-252 constitute a Peptidase S1 domain; sequence IIGGDECNIN…TEWIQSIIAG (228 aa). Intrachain disulfides connect Cys31-Cys165, Cys52-Cys68, Cys100-Cys258, Cys144-Cys212, Cys176-Cys191, and Cys202-Cys227. Residues His67 and Asp112 each act as charge relay system in the active site. N-linked (GlcNAc...) asparagine glycans are attached at residues Asn123 and Asn124. The Charge relay system role is filled by Ser206.

This sequence belongs to the peptidase S1 family. Snake venom subfamily. In terms of assembly, monomer. Expressed by the venom gland.

The protein resides in the secreted. With respect to regulation, completely inhibited by PMSF, and N-tosyl-Lphenylalanine chloromethyl ketone (TPCK) and poorly inhibited by benzamidine and derivates. Not inhibited by EDTA, heparin and hirudin. Its function is as follows. Thrombin-like snake venom serine protease. The recombinant form clots fibrinogen by cleaving fibrinogen Aalpha chain (FGA), and slowly Bbeta chain (FGB). Has amidolytic activities. The polypeptide is Thrombin-like enzyme gloshedobin (Gloydius shedaoensis (Shedao island pit viper)).